The chain runs to 881 residues: Putative SWI/SNF-related matrix-associated actin-dependent regulator of chromatin subfamily A member 3-like 1 (881 aa).

The Helicase ATP-binding domain occupies 272-486 (DKRPDPLRGG…YSLMAFLRFE (215 aa)). Residue 285 to 292 (DDMGLGKT) participates in ATP binding. The interval 308-343 (STSTPTEEPLDGEGDKIEKKGKKRGRGKSSESVTRK) is disordered. Positions 437 to 440 (DEAH) match the DEAH box motif. The segment at 635–674 (CPICISPPTNIIITRCAHIFCRACILQTLQRSKPLCPLCR) adopts an RING-type zinc-finger fold. The disordered stretch occupies residues 681 to 703 (DLYNAPPPPPDSSNTDGEDAKSS). The 166-residue stretch at 711 to 876 (ALLSLLMASR…EREVNVEDVV (166 aa)) folds into the Helicase C-terminal domain.

It belongs to the SNF2/RAD54 helicase family. RAD16 subfamily.

The protein localises to the nucleus. In terms of biological role, possesses intrinsic ATP-dependent nucleosome-remodeling activity. This activity may be required for transcriptional activation or repression of specific target promoters. In Arabidopsis thaliana (Mouse-ear cress), this protein is Putative SWI/SNF-related matrix-associated actin-dependent regulator of chromatin subfamily A member 3-like 1.